The sequence spans 362 residues: Serine/threonine-protein phosphatase 2A activator 1 (362 aa).

Positions methionine 1–proline 10 are enriched in pro residues. Disordered stretches follow at residues methionine 1–arginine 28 and asparagine 339–arginine 362. The span at valine 340–glycine 351 shows a compositional bias: basic and acidic residues.

Belongs to the PTPA-type PPIase family.

The protein localises to the cytoplasm. Its subcellular location is the nucleus. It carries out the reaction [protein]-peptidylproline (omega=180) = [protein]-peptidylproline (omega=0). PPIases accelerate the folding of proteins. It catalyzes the cis-trans isomerization of proline imidic peptide bonds in oligopeptides. Acts as a regulatory subunit for PP2A-like phosphatases modulating their activity or substrate specificity, probably by inducing a conformational change in the catalytic subunit, a direct target of the PPIase. Can reactivate inactive phosphatase PP2A-phosphatase methylesterase complexes (PP2Ai) in presence of ATP and Mg(2+) by dissociating the inactive form from the complex. The protein is Serine/threonine-protein phosphatase 2A activator 1 (RRD1) of Cryptococcus neoformans var. neoformans serotype D (strain B-3501A) (Filobasidiella neoformans).